Reading from the N-terminus, the 314-residue chain is tRNA selenocysteine 1-associated protein 1 (314 aa).

2 RRM domains span residues Asn-2–Tyr-85 and Phe-94–Ser-173.

Belongs to the RRM TRSPAP family.

The protein localises to the nucleus. The protein resides in the cytoplasm. Involved in the early steps of selenocysteine biosynthesis and tRNA(Sec) charging to the later steps resulting in the cotranslational incorporation of selenocysteine into selenoproteins. This chain is tRNA selenocysteine 1-associated protein 1, found in Danio rerio (Zebrafish).